The sequence spans 395 residues: Beta-1,4-galactosyltransferase 3 (395 aa).

Residues 1-10 lie on the Cytoplasmic side of the membrane; it reads MLRRLLERPC. A helical; Signal-anchor for type II membrane protein transmembrane segment spans residues 11-31; the sequence is TLALLVGSQLAVMMYLSLGGF. The Lumenal portion of the chain corresponds to 32–395; sequence RSLSALFGRD…ANHTAPRGSH (364 aa). Asparagine 57 carries an N-linked (GlcNAc...) asparagine glycan. Cysteines 79 and 121 form a disulfide. UDP-alpha-D-galactose is bound at residue 132–136; that stretch reads PHRAR. N-linked (GlcNAc...) asparagine glycosylation is present at asparagine 168. UDP-alpha-D-galactose contacts are provided by residues 171–173, 198–199, tyrosine 228, and tryptophan 260; these read FNR and VD. Cysteine 192 and cysteine 211 are oxidised to a cystine. Aspartate 199 is a Mn(2+) binding site. N-acetyl-D-glucosamine is bound at residue 262–265; that stretch reads GEDD. Histidine 293 serves as a coordination point for Mn(2+). 293-295 is a UDP-alpha-D-galactose binding site; the sequence is HRG. Position 305 (arginine 305) interacts with N-acetyl-D-glucosamine. Asparagine 339 carries N-linked (GlcNAc...) asparagine glycosylation. Positions 340–395 are disordered; sequence ITADIGTDPRGPRSPSGPRYPPGSSQAFRQEMLQRRPPARPGPLPTANHTAPRGSH. Residues 352–364 show a composition bias toward low complexity; that stretch reads RSPSGPRYPPGSS. The N-linked (GlcNAc...) asparagine glycan is linked to asparagine 387.

This sequence belongs to the glycosyltransferase 7 family. The cofactor is Mn(2+).

The protein localises to the golgi apparatus. The protein resides in the golgi stack membrane. The catalysed reaction is an N-acetyl-beta-D-glucosaminyl derivative + UDP-alpha-D-galactose = a beta-D-galactosyl-(1-&gt;4)-N-acetyl-beta-D-glucosaminyl derivative + UDP + H(+). It carries out the reaction N-acetyl-D-glucosamine + UDP-alpha-D-galactose = beta-D-galactosyl-(1-&gt;4)-N-acetyl-D-glucosamine + UDP + H(+). It catalyses the reaction a beta-D-GlcNAc-(1-&gt;3)-beta-D-Gal-(1-&gt;4)-beta-D-Glc-(1&lt;-&gt;1)-Cer(d18:1(4E)) + UDP-alpha-D-galactose = a neolactoside nLc4Cer(d18:1(4E)) + UDP + H(+). The enzyme catalyses a beta-D-glucosylceramide + UDP-alpha-D-galactose = a beta-D-galactosyl-(1-&gt;4)-beta-D-glucosyl-(1&lt;-&gt;1)-ceramide + UDP + H(+). The catalysed reaction is a neolactoside IV(3)-beta-GlcNAc-nLc4Cer + UDP-alpha-D-galactose = a neolactoside nLc6Cer + UDP + H(+). The protein operates within protein modification; protein glycosylation. Its function is as follows. Responsible for the synthesis of complex-type N-linked oligosaccharides in many glycoproteins as well as the carbohydrate moieties of glycolipids. In Mus musculus (Mouse), this protein is Beta-1,4-galactosyltransferase 3.